The primary structure comprises 201 residues: Probable molybdenum cofactor guanylyltransferase (201 aa).

GTP contacts are provided by residues 16-18 (LAG), Lys28, Asp75, and Asp107. Residue Asp107 coordinates Mg(2+).

Belongs to the MobA family. The cofactor is Mg(2+).

It localises to the cytoplasm. The catalysed reaction is Mo-molybdopterin + GTP + H(+) = Mo-molybdopterin guanine dinucleotide + diphosphate. Functionally, transfers a GMP moiety from GTP to Mo-molybdopterin (Mo-MPT) cofactor (Moco or molybdenum cofactor) to form Mo-molybdopterin guanine dinucleotide (Mo-MGD) cofactor. In Mycobacterium marinum (strain ATCC BAA-535 / M), this protein is Probable molybdenum cofactor guanylyltransferase.